A 1238-amino-acid chain; its full sequence is Anion exchange protein 2 (1238 aa).

A disordered region spans residues 1-238 (MSGTPRRPAS…YNLQERRRIG (238 aa)). Topologically, residues 1 to 704 (MSGTPRRPAS…SDFRDALDPQ (704 aa)) are cytoplasmic. Composition is skewed to basic and acidic residues over residues 37 to 49 (DLHR…RFEE) and 58 to 75 (GGEE…EYHR). 2 stretches are compositionally biased toward basic residues: residues 76-85 (QSSHHIHHPL) and 94-110 (RRRK…RRRP). The segment covering 120–133 (TIEEGEEDEDETSE) has biased composition (acidic residues). 4 positions are modified to phosphoserine: Ser132, Ser144, Ser170, and Ser172. A compositionally biased stretch (polar residues) spans 141–154 (TDPSPASTPTSVQF). Gly residues predominate over residues 205–215 (GTAGGDDGGAS). Ser239 carries the post-translational modification Phosphoserine. Thr253 is modified (phosphothreonine). Position 270 is an N6-methyllysine (Lys270). Residues 277–315 (VPGVRRHLVRKNAKGSSQSSREGREPGPTPRTRPRAPHK) form a disordered region. The span at 280-289 (VRRHLVRKNA) shows a compositional bias: basic residues. Ser439 bears the Phosphoserine mark. A disordered region spans residues 445–466 (SLLGHHHTQGAESDPHVTEPLI). A run of 4 helical transmembrane segments spans residues 705 to 728 (CLAA…GLLG), 734 to 771 (LIGV…LLVF), 791 to 813 (VWIG…SFLV), and 823 to 844 (IFAF…VKIF). The membrane (anion exchange) stretch occupies residues 705–1238 (CLAAVIFIYF…DEYNEMPMPV (534 aa)). Over 845–897 (QEHPLHGCLASNSSEADGGKNTTWTEAAPTPGHGNTSSAEQAGVERPQGQPNT) the chain is Extracellular. N-linked (GlcNAc...) asparagine glycosylation is found at Asn856, Asn865, and Asn879. Residues 858–869 (SEADGGKNTTWT) show a composition bias toward polar residues. The tract at residues 858–892 (SEADGGKNTTWTEAAPTPGHGNTSSAEQAGVERPQ) is disordered. Residues 898-915 (ALLSLVLMAGTFFIAFFL) traverse the membrane as a helical segment. Over 916–930 (RKFKNSRFFPGRIRR) the chain is Cytoplasmic. 5 consecutive transmembrane segments (helical) span residues 931 to 951 (VIGD…DYSI), 985 to 1007 (PFPV…LIFM), 1033 to 1054 (LLLI…LAAA), 1088 to 1133 (VTGL…IQFY), and 1160 to 1196 (MHLF…TVPL). Cys1170 is lipidated: S-palmitoyl cysteine.

It belongs to the anion exchanger (TC 2.A.31) family. Expressed in the cochlea (at protein level).

The protein localises to the apical cell membrane. It is found in the basolateral cell membrane. The catalysed reaction is hydrogencarbonate(in) + chloride(out) = hydrogencarbonate(out) + chloride(in). In terms of biological role, sodium-independent anion exchanger which mediates the electroneutral exchange of chloride for bicarbonate ions across the cell membrane. Plays an important role in osteoclast differentiation and function. Regulates bone resorption and calpain-dependent actin cytoskeleton organization in osteoclasts via anion exchange-dependent control of pH. Essential for intracellular pH regulation in CD8(+) T-cells upon CD3 stimulation, modulating CD8(+) T-cell response. This chain is Anion exchange protein 2 (SLC4A2), found in Cavia porcellus (Guinea pig).